We begin with the raw amino-acid sequence, 285 residues long: NADPH-dependent 7-cyano-7-deazaguanine reductase (285 aa).

A substrate-binding site is contributed by 91 to 93; the sequence is IES. Residue 93 to 94 coordinates NADPH; it reads SK. Residue Cys191 is the Thioimide intermediate of the active site. The active-site Proton donor is Asp198. 230-231 lines the substrate pocket; it reads HE. NADPH is bound at residue 259 to 260; sequence RG.

This sequence belongs to the GTP cyclohydrolase I family. QueF type 2 subfamily. Homodimer.

Its subcellular location is the cytoplasm. The catalysed reaction is 7-aminomethyl-7-carbaguanine + 2 NADP(+) = 7-cyano-7-deazaguanine + 2 NADPH + 3 H(+). Its pathway is tRNA modification; tRNA-queuosine biosynthesis. Functionally, catalyzes the NADPH-dependent reduction of 7-cyano-7-deazaguanine (preQ0) to 7-aminomethyl-7-deazaguanine (preQ1). This is NADPH-dependent 7-cyano-7-deazaguanine reductase from Legionella pneumophila (strain Lens).